The primary structure comprises 896 residues: Alanine--tRNA ligase (896 aa).

Positions 439-456 (QRAKDDAKAKKGQHRDAS) are enriched in basic and acidic residues. Positions 439 to 459 (QRAKDDAKAKKGQHRDASAYR) are disordered. Zn(2+) is bound by residues His579, His583, Cys681, and His685.

The protein belongs to the class-II aminoacyl-tRNA synthetase family. Zn(2+) serves as cofactor.

It is found in the cytoplasm. The catalysed reaction is tRNA(Ala) + L-alanine + ATP = L-alanyl-tRNA(Ala) + AMP + diphosphate. In terms of biological role, catalyzes the attachment of alanine to tRNA(Ala) in a two-step reaction: alanine is first activated by ATP to form Ala-AMP and then transferred to the acceptor end of tRNA(Ala). Also edits incorrectly charged Ser-tRNA(Ala) and Gly-tRNA(Ala) via its editing domain. In Nocardioides sp. (strain ATCC BAA-499 / JS614), this protein is Alanine--tRNA ligase.